The chain runs to 209 residues: Streptogramin A acetyltransferase (209 aa).

The active site involves H82.

This sequence belongs to the transferase hexapeptide repeat family. In terms of assembly, homohexamer.

In terms of biological role, inactivates the A compounds of streptogramin antibiotics by acetylation, thus providing resistance to these antibiotics. The protein is Streptogramin A acetyltransferase (vatD) of Enterococcus faecium (Streptococcus faecium).